Reading from the N-terminus, the 194-residue chain is A-type ATP synthase subunit E (194 aa).

Belongs to the V-ATPase E subunit family. Has multiple subunits with at least A(3), B(3), C, D, E, F, H, I and proteolipid K(x).

Its subcellular location is the cell membrane. Component of the A-type ATP synthase that produces ATP from ADP in the presence of a proton gradient across the membrane. The polypeptide is A-type ATP synthase subunit E (Haloferax volcanii (strain ATCC 29605 / DSM 3757 / JCM 8879 / NBRC 14742 / NCIMB 2012 / VKM B-1768 / DS2) (Halobacterium volcanii)).